The primary structure comprises 159 residues: uncharacterized protein (159 aa).

3 helical membrane-spanning segments follow: residues 10–30, 52–72, and 96–116; these read FLSM…SLFF, MLIL…VILL, and LTLI…PFVT.

Its subcellular location is the membrane. This is an uncharacterized protein from Escherichia coli (strain K12).